Reading from the N-terminus, the 426-residue chain is 3-phosphoshikimate 1-carboxyvinyltransferase (426 aa).

3 residues coordinate 3-phosphoshikimate: Lys22, Ser23, and Arg27. Lys22 contacts phosphoenolpyruvate. Phosphoenolpyruvate contacts are provided by Gly96 and Arg124. Positions 170, 171, 172, 198, 314, 337, and 341 each coordinate 3-phosphoshikimate. Gln172 is a phosphoenolpyruvate binding site. The active-site Proton acceptor is Asp314. Residues Arg345, Arg387, and Lys412 each contribute to the phosphoenolpyruvate site.

It belongs to the EPSP synthase family. As to quaternary structure, monomer.

Its subcellular location is the cytoplasm. The enzyme catalyses 3-phosphoshikimate + phosphoenolpyruvate = 5-O-(1-carboxyvinyl)-3-phosphoshikimate + phosphate. The protein operates within metabolic intermediate biosynthesis; chorismate biosynthesis; chorismate from D-erythrose 4-phosphate and phosphoenolpyruvate: step 6/7. Functionally, catalyzes the transfer of the enolpyruvyl moiety of phosphoenolpyruvate (PEP) to the 5-hydroxyl of shikimate-3-phosphate (S3P) to produce enolpyruvyl shikimate-3-phosphate and inorganic phosphate. This Shewanella piezotolerans (strain WP3 / JCM 13877) protein is 3-phosphoshikimate 1-carboxyvinyltransferase.